Consider the following 334-residue polypeptide: MSQSKGKKRNPGLKIPKEAFEQPQTSSTPPRDLDSKACISIGNQNFEVKADDLEPIVELGRGAYGVVEKMRHVPSGQIMAVKRIRATVNSQEQKRLLMDLDVSMRTVDCPFTVTFYGALFREGDVWICMELMDTSLDKFYKQVIDKGQTIPEDILGKIAVSIVKALEHLHSKLSVIHRDVKPSNVLINTLGQVKMCDFGISGYLVDSVAKTIDAGCKPYMAPERINPELNQKGYSVKSDIWSLGITMIELAILRFPYDSWGTPFQQLKQVVEEPSPQLPADKFSADFVDFTSQCLKKNSKERPTYPELMQHPFFTVHESKAADVASFVKLILGD.

Over residues M1–P11 the composition is skewed to basic residues. The tract at residues M1 to D34 is disordered. The interval S4–A19 is d domain. A Protein kinase domain is found at L53 to F314. Residues L59–V67 and K82 each bind ATP. Residue D179 is the Proton acceptor of the active site. S207 bears the Phosphoserine; by MAPK3 mark. T211 bears the Phosphothreonine; by MAPK3 mark. Positions H311–D334 are DVD domain.

The protein belongs to the protein kinase superfamily. STE Ser/Thr protein kinase family. MAP kinase kinase subfamily. Dimer. Interacts (via its D domain) with its substrates MAPK11, MAPK12, MAPK13 and MAPK14. Interacts (via its DVD domain) with MAP3Ks activators like MAP3K5/ASK1, MAP3K1/MEKK1, MAP3K2/MEKK2, MAP3K3/MEKK3, MAP3K4/MEKK4, MAP3K7/TAK1, MAP3K11/MLK3 and MAP3K17/TAOK2. Interacts with DCTN1. Interacts with EIF2AK2/PKR. Post-translationally, weakly autophosphorylated. Phosphorylated at Ser-207 and Thr-211 by the majority of M3Ks, such as MAP3K5/ASK1, MAP3K1/MEKK1, MAP3K2/MEKK2, MAP3K3/MEKK3, MAP3K4/MEKK4, MAP3K7/TAK1, MAP3K11/MLK3 and MAP3K17/TAOK2. In terms of processing, in response to genotoxic stress, MAP3K-phosphorylated MAP2K6 is ubiquitinated and degraded by the SCF(FBXO31) complex.

The protein localises to the nucleus. Its subcellular location is the cytoplasm. It localises to the cytoskeleton. It carries out the reaction L-seryl-[protein] + ATP = O-phospho-L-seryl-[protein] + ADP + H(+). The enzyme catalyses L-threonyl-[protein] + ATP = O-phospho-L-threonyl-[protein] + ADP + H(+). The catalysed reaction is L-tyrosyl-[protein] + ATP = O-phospho-L-tyrosyl-[protein] + ADP + H(+). Activated by dual phosphorylation on Ser-207 and Thr-211 in response to a variety of cellular stresses, including UV radiation, osmotic shock, hypoxia, inflammatory cytokines, interferon gamma (IFNG), and less often by growth factors. MAP2K6/MKK6 is activated by the majority of M3Ks, such as MAP3K5/ASK1, MAP3K1/MEKK1, MAP3K2/MEKK2, MAP3K3/MEKK3, MAP3K4/MEKK4, MAP3K7/TAK1, MAP3K11/MLK3 and MAP3K17/TAOK2. Functionally, dual specificity protein kinase which acts as an essential component of the MAP kinase signal transduction pathway. With MAP3K3/MKK3, catalyzes the concomitant phosphorylation of a threonine and a tyrosine residue in the MAP kinases p38 MAPK11, MAPK12, MAPK13 and MAPK14 and plays an important role in the regulation of cellular responses to cytokines and all kinds of stresses. Especially, MAP2K3/MKK3 and MAP2K6/MKK6 are both essential for the activation of MAPK11 and MAPK13 induced by environmental stress, whereas MAP2K6/MKK6 is the major MAPK11 activator in response to TNF. MAP2K6/MKK6 also phosphorylates and activates PAK6. The p38 MAP kinase signal transduction pathway leads to direct activation of transcription factors. Nuclear targets of p38 MAP kinase include the transcription factors ATF2 and ELK1. Within the p38 MAPK signal transduction pathway, MAP3K6/MKK6 mediates phosphorylation of STAT4 through MAPK14 activation, and is therefore required for STAT4 activation and STAT4-regulated gene expression in response to IL-12 stimulation. The pathway is also crucial for IL-6-induced SOCS3 expression and down-regulation of IL-6-mediated gene induction; and for IFNG-dependent gene transcription. Has a role in osteoclast differentiation through NF-kappa-B transactivation by TNFSF11, and in endochondral ossification and since SOX9 is another likely downstream target of the p38 MAPK pathway. MAP2K6/MKK6 mediates apoptotic cell death in thymocytes. Acts also as a regulator for melanocytes dendricity, through the modulation of Rho family GTPases. The chain is Dual specificity mitogen-activated protein kinase kinase 6 (Map2k6) from Mus musculus (Mouse).